A 151-amino-acid polypeptide reads, in one-letter code: Putative coiled-coil-helix-coiled-coil-helix domain-containing protein CHCHD2P9, mitochondrial (151 aa).

A mitochondrion-targeting transit peptide spans 1–9 (MPRGSRSRT). Disordered stretches follow at residues 1–50 (MPRG…AAAP) and 75–110 (TQGHAVTGGFSGGSNAEPARPDIAYQEPQGTQPAQQ). The span at 10 to 26 (SRMAPPASRAPQMRAAP) shows a compositional bias: low complexity. Over residues 27-38 (RPAPVAQPPAAA) the composition is skewed to pro residues. Low complexity-rich tracts occupy residues 39 to 50 (PPSAVGSSAAAP) and 100 to 110 (QEPQGTQPAQQ). In terms of domain architecture, CHCH spans 111 to 151 (QQPCFYGIKQFLECAQNQGDIKLCEDFSKVLKQCRLAKGLA). Short sequence motifs (cx9C motif) lie at residues 114 to 124 (CFYGIKQFLEC) and 134 to 144 (CEDFSKVLKQC). Cystine bridges form between cysteine 114-cysteine 144 and cysteine 124-cysteine 134.

The protein localises to the mitochondrion. This is Putative coiled-coil-helix-coiled-coil-helix domain-containing protein CHCHD2P9, mitochondrial (CHCHD2P9) from Homo sapiens (Human).